We begin with the raw amino-acid sequence, 269 residues long: Energy-coupling factor transporter ATP-binding protein EcfA1 (269 aa).

Residues 8 to 242 (IVFKNVSFQY…AEELTTIGLD (235 aa)) form the ABC transporter domain. An ATP-binding site is contributed by 42–49 (GHNGSGKS).

The protein belongs to the ABC transporter superfamily. Energy-coupling factor EcfA family. Forms a stable energy-coupling factor (ECF) transporter complex composed of 2 membrane-embedded substrate-binding proteins (S component), 2 ATP-binding proteins (A component) and 2 transmembrane proteins (T component).

It is found in the cell membrane. Functionally, ATP-binding (A) component of a common energy-coupling factor (ECF) ABC-transporter complex. Unlike classic ABC transporters this ECF transporter provides the energy necessary to transport a number of different substrates. In Staphylococcus aureus (strain MRSA252), this protein is Energy-coupling factor transporter ATP-binding protein EcfA1.